Reading from the N-terminus, the 405-residue chain is Acetate kinase (405 aa).

Residue N7 participates in Mg(2+) binding. K14 lines the ATP pocket. Residue R91 participates in substrate binding. D148 functions as the Proton donor/acceptor in the catalytic mechanism. ATP is bound by residues 208–212 (HLGNG) and 283–285 (DFR). E384 is a Mg(2+) binding site.

This sequence belongs to the acetokinase family. Homodimer. Mg(2+) serves as cofactor. Mn(2+) is required as a cofactor.

The protein localises to the cytoplasm. It carries out the reaction acetate + ATP = acetyl phosphate + ADP. It functions in the pathway metabolic intermediate biosynthesis; acetyl-CoA biosynthesis; acetyl-CoA from acetate: step 1/2. In terms of biological role, catalyzes the formation of acetyl phosphate from acetate and ATP. Can also catalyze the reverse reaction. In Dictyoglomus turgidum (strain DSM 6724 / Z-1310), this protein is Acetate kinase.